The primary structure comprises 135 residues: NADH-quinone oxidoreductase subunit K (135 aa).

Transmembrane regions (helical) follow at residues 33-53 (VLGL…FAIG), 63-83 (FLFM…AFVV), and 95-115 (IMFI…LAIL).

The protein belongs to the complex I subunit 4L family. In terms of assembly, NDH-1 is composed of 14 different subunits. Subunits NuoA, H, J, K, L, M, N constitute the membrane sector of the complex.

The protein localises to the cell inner membrane. It catalyses the reaction a quinone + NADH + 5 H(+)(in) = a quinol + NAD(+) + 4 H(+)(out). Functionally, NDH-1 shuttles electrons from NADH, via FMN and iron-sulfur (Fe-S) centers, to quinones in the respiratory chain. The immediate electron acceptor for the enzyme in this species is believed to be ubiquinone. Couples the redox reaction to proton translocation (for every two electrons transferred, four hydrogen ions are translocated across the cytoplasmic membrane), and thus conserves the redox energy in a proton gradient. The sequence is that of NADH-quinone oxidoreductase subunit K from Psychrobacter arcticus (strain DSM 17307 / VKM B-2377 / 273-4).